An 838-amino-acid polypeptide reads, in one-letter code: Phosphatidylethanolamine N-methyltransferase 1 (838 aa).

Over 1 to 48 the chain is Lumenal; the sequence is MATEIITEKKEIVARTRSSGITFNPPVTHDMVRSLFDPTIKKSFLECC. Residues 49-69 traverse the membrane as a helical segment; it reads ITLTILANFVLCYYLINWFGL. Residues 70-73 lie on the Cytoplasmic side of the membrane; the sequence is SQAK. A helical transmembrane segment spans residues 74 to 94; it reads LIFLIQYVYWRLAYNLGIGII. Residues 95–157 are Lumenal-facing; the sequence is LHYQSHYESL…ELNCWLLFRQ (63 aa). Residues 158-178 traverse the membrane as a helical segment; sequence FVDLILMQDFTTYIIYVYLSL. Over 179 to 184 the chain is Cytoplasmic; sequence PTDVSS. The helical transmembrane segment at 185-205 threads the bilayer; it reads LINWKSLIGIAMILFNIWVKI. The Lumenal portion of the chain corresponds to 206 to 236; sequence DAHRVVKDYAWYWGDFFFLQDAELTFDGVFN. Residues 237–257 traverse the membrane as a helical segment; sequence ISPHPMYSIGYLGYYGLSLIC. Topologically, residues 258 to 261 are cytoplasmic; it reads GDYR. A helical transmembrane segment spans residues 262-282; the sequence is VLLVSVGGHFLQFLFLKYVES. Over 283–328 the chain is Lumenal; sequence PHIERTYGSDSPSNSTQHQIDDLIAKENYDYSRPLINTGILFENFQ. A helical membrane pass occupies residues 329-349; it reads FLRFSDYFTVSTILVLFSWFF. Residues 350–356 are Cytoplasmic-facing; sequence TSKPSNN. The helical transmembrane segment at 357–377 threads the bilayer; sequence FLFVLTLLTKLTTWLLTSWIL. At 378 to 403 the chain is on the lumenal side; the sequence is FQQSNRKWFTRLFLKNGYTQIYSYQQ. The chain crosses the membrane as a helical span at residues 404–424; the sequence is WQFLYNYSLIVTNTLLFLHTL. At 425–435 the chain is on the cytoplasmic side; it reads SELYSIQSSDG. The chain crosses the membrane as a helical span at residues 436-456; that stretch reads LNNSHVIFGLLLCAIQIWCNV. Topologically, residues 457-517 are lumenal; the sequence is ETRDAISDFG…VLMTNFSKTN (61 aa). The helical transmembrane segment at 518-538 threads the bilayer; sequence VTLAVLWTVTNLIFVKLIEEP. Topologically, residues 539-838 are cytoplasmic; that stretch reads HVSKVYGNGT…DIKEVLDSLN (300 aa).

It belongs to the class VI-like SAM-binding methyltransferase superfamily. CHO2 family.

It localises to the endoplasmic reticulum membrane. The enzyme catalyses a 1,2-diacyl-sn-glycero-3-phosphoethanolamine + S-adenosyl-L-methionine = a 1,2-diacyl-sn-glycero-3-phospho-N-methylethanolamine + S-adenosyl-L-homocysteine + H(+). It functions in the pathway phospholipid metabolism; phosphatidylcholine biosynthesis. Functionally, catalyzes the first step of the methylation pathway of phosphatidylcholine biosynthesis, the SAM-dependent methylation of phosphatidylethanolamine (PE) to phosphatidylmonomethylethanolamine (PMME). This chain is Phosphatidylethanolamine N-methyltransferase 1 (CHO2-1), found in Vanderwaltozyma polyspora (strain ATCC 22028 / DSM 70294 / BCRC 21397 / CBS 2163 / NBRC 10782 / NRRL Y-8283 / UCD 57-17) (Kluyveromyces polysporus).